Here is a 445-residue protein sequence, read N- to C-terminus: MDIRQVRETVEMIEEQHFDIRTITMGISLLDCVDSDIDRAAAKIYQKITTKAANLVAVGDDIAAELGIPIVNKRVSVTPIALIGAATDAEDYLPLAKALDQAACDIGVDFIGGFSALVQKGYQKGDKILIESIPQALAQTKKVCASVNVGSTRSGINMTAVADMGRIIKETAKASEMGAAKLVVFANAVEDNPFMAGAFHGVGEADTVINVGVSGPGVVKRALEKVRGESFDVLAETVKKTAFKITRIGQLVGQMASERLGVGFGVVDLSLAPTPAVGDSVARVLEEMGLEMVGTHGTAAALALLNDAVKKGGVMACNRVGGLSGAFIPVSEDEGMIAAVQGGSLNLEKLEAMTAICSVGLDMIAIPEETPSETIAAMIADEAAIGVINQKTTAVRIIPKGKEGDMIAFGGLLGTAPVMPVNPHSSLEFIARGGQIPAPIHSFKN.

Belongs to the UPF0210 family. Homodimer.

This Streptococcus equi subsp. zooepidemicus (strain H70) protein is UPF0210 protein SZO_15840.